Consider the following 424-residue polypeptide: L-glutamine:2-deoxy-scyllo-inosose aminotransferase (424 aa).

At Lys-202 the chain carries N6-(pyridoxal phosphate)lysine.

It belongs to the DegT/DnrJ/EryC1 family. L-glutamine:2-deoxy-scyllo-inosose/scyllo-inosose aminotransferase subfamily. Pyridoxal 5'-phosphate is required as a cofactor.

The enzyme catalyses 2-deoxy-L-scyllo-inosose + L-glutamine = 2-deoxy-scyllo-inosamine + 2-oxoglutaramate. The catalysed reaction is 3-amino-2,3-dideoxy-scyllo-inosose + L-glutamine = 2-deoxystreptamine + 2-oxoglutaramate. It functions in the pathway metabolic intermediate biosynthesis; 2-deoxystreptamine biosynthesis; 2-deoxystreptamine from D-glucose 6-phosphate: step 2/4. The protein operates within antibiotic biosynthesis; tobramycin biosynthesis. In terms of biological role, catalyzes the PLP-dependent transamination of 2-deoxy-scyllo-inosose (2-DOI) to form 2-deoxy-scyllo-inosamine (2-DOIA) using L-glutamine as the amino donor. Also catalyzes the transamination of 3-amino-2,3-dideoxy-scyllo-inosose (keto-2-DOIA) into 2-deoxystreptamine (2-DOS). The protein is L-glutamine:2-deoxy-scyllo-inosose aminotransferase (tbmB) of Streptoalloteichus tenebrarius (strain ATCC 17920 / DSM 40477 / JCM 4838 / CBS 697.72 / NBRC 16177 / NCIMB 11028 / NRRL B-12390 / A12253. 1 / ISP 5477) (Streptomyces tenebrarius).